A 357-amino-acid chain; its full sequence is 3-isopropylmalate dehydrogenase (357 aa).

An NAD(+)-binding site is contributed by G76–E89. Substrate contacts are provided by R96, R106, R134, and D224. D224, D248, and D252 together coordinate Mg(2+). G282–N294 lines the NAD(+) pocket.

It belongs to the isocitrate and isopropylmalate dehydrogenases family. LeuB type 1 subfamily. As to quaternary structure, homodimer. Mg(2+) is required as a cofactor. It depends on Mn(2+) as a cofactor.

The protein resides in the cytoplasm. The catalysed reaction is (2R,3S)-3-isopropylmalate + NAD(+) = 4-methyl-2-oxopentanoate + CO2 + NADH. It functions in the pathway amino-acid biosynthesis; L-leucine biosynthesis; L-leucine from 3-methyl-2-oxobutanoate: step 3/4. Catalyzes the oxidation of 3-carboxy-2-hydroxy-4-methylpentanoate (3-isopropylmalate) to 3-carboxy-4-methyl-2-oxopentanoate. The product decarboxylates to 4-methyl-2 oxopentanoate. The chain is 3-isopropylmalate dehydrogenase from Xanthomonas oryzae pv. oryzae (strain MAFF 311018).